The following is a 149-amino-acid chain: Protein AIM7 (149 aa).

Position 2 is an N-acetylserine (Ser-2). Residues 3–147 form the ADF-H domain; the sequence is NLYKIGTETR…DVEELREQLE (145 aa). Ser-137 bears the Phosphoserine mark.

Belongs to the actin-binding proteins ADF family. GMF subfamily.

Its subcellular location is the cytoplasm. It is found in the nucleus. In terms of biological role, may be involved in mitochondrial organization and biogenesis. The chain is Protein AIM7 (AIM7) from Saccharomyces cerevisiae (strain ATCC 204508 / S288c) (Baker's yeast).